A 636-amino-acid polypeptide reads, in one-letter code: Receptor-like kinase LIP1 (636 aa).

The segment at 18 to 57 (NAPCTTNETNDDNVEHDEFRPPVVATTKRTEEREPAEQQP) is disordered. A Protein kinase domain is found at 74–352 (FRQECLLGEG…SDVMVALSFL (279 aa)). ATP contacts are provided by residues 80–88 (LGEGGFGRV) and Lys-103. Asp-201 serves as the catalytic Proton acceptor. Ser-205 and Ser-236 each carry phosphoserine. Thr-242 carries the post-translational modification Phosphothreonine. The residue at position 250 (Tyr-250) is a Phosphotyrosine. The segment at 389–636 (FCISRKDVGN…EEEHISSDHD (248 aa)) is disordered. Residues 403–434 (SSDSEDEEEEKEQKAEKEEESTSKKRQEQEET) are a coiled coil. Residues 413–431 (KEQKAEKEEESTSKKRQEQ) show a composition bias toward basic and acidic residues. Residues 432 to 455 (EETATDSDDESDSNSEKDQEEEQS) are compositionally biased toward acidic residues. Residues 480–489 (TNATAQSLKI) are compositionally biased toward polar residues. 2 stretches are compositionally biased toward basic and acidic residues: residues 522–531 (DSGRDHDDSS) and 554–566 (HETR…DDSP). Polar residues predominate over residues 567–576 (RNTSMRINSL). 2 stretches are compositionally biased toward basic and acidic residues: residues 588–603 (NHQT…KSED) and 619–636 (SLHR…SDHD).

This sequence belongs to the protein kinase superfamily. Ser/Thr protein kinase family. As to quaternary structure, interacts with PRK6. Palmitoylated. As to expression, expressed in mature pollen and in germinating pollen tubes.

Its subcellular location is the cell membrane. It is found in the cytoplasm. Functionally, involved in pollen tube guidance into micropyle. Participates in perception of the ovule-secreted peptide signal LURE1. The polypeptide is Receptor-like kinase LIP1 (Arabidopsis thaliana (Mouse-ear cress)).